The chain runs to 84 residues: UPF0512 protein O (84 aa).

Belongs to the UPF0512 family.

This chain is UPF0512 protein O, found in Dictyostelium discoideum (Social amoeba).